The following is a 389-amino-acid chain: Methionyl-tRNA formyltransferase, mitochondrial (389 aa).

Belongs to the Fmt family.

The protein localises to the mitochondrion. It catalyses the reaction L-methionyl-tRNA(fMet) + (6R)-10-formyltetrahydrofolate = N-formyl-L-methionyl-tRNA(fMet) + (6S)-5,6,7,8-tetrahydrofolate + H(+). Functionally, methionyl-tRNA formyltransferase that formylates methionyl-tRNA in mitochondria and is crucial for translation initiation. This chain is Methionyl-tRNA formyltransferase, mitochondrial (MTFMT), found in Homo sapiens (Human).